The primary structure comprises 836 residues: Protein O-mannosyl-transferase TMTC2 (836 aa).

Residues 1 to 21 (MIAELVSSALGLALYLNTLSA) form a helical membrane-spanning segment. Topologically, residues 22–84 (DFCYDDSRAI…LNHAIGGLNP (63 aa)) are extracellular. A helical membrane pass occupies residues 85–105 (WSYHLVNVLLHAAVTGLFTSF). Residues 106 to 107 (SK) are Cytoplasmic-facing. The helical transmembrane segment at 108-128 (ILLGDGYWTFMAGLMFASHPI) threads the bilayer. The Extracellular segment spans residues 129-132 (HTEA). The chain crosses the membrane as a helical span at residues 133–153 (VAGIVGRADVGASLFFLLSLL). The Cytoplasmic portion of the chain corresponds to 154-162 (CYIKHCSTR). 2 helical membrane passes run 163–184 (GYSARTWGWFLGSGLCAGCSML) and 185–204 (WKEQGVTVLAVSAVYDVFVF). Over 205–220 (HRLKIKQILPTIYKRK) the chain is Cytoplasmic. The chain crosses the membrane as a helical span at residues 221–241 (NLSLFLSISLLIFWGSSLLGA). The Extracellular segment spans residues 242-312 (RLYWMGNKPP…KTVCDWRNLH (71 aa)). The helical transmembrane segment at 313–333 (TVAFYTGLLLLAYYGLKSPSV) threads the bilayer. The Cytoplasmic portion of the chain corresponds to 334–399 (DRECNGKTVT…TENIVVLSLS (66 aa)). The chain crosses the membrane as a helical span at residues 400–420 (LLIIPFVPATNLFFYVGFVIA). At 421 to 422 (ER) the chain is on the extracellular side. The helical transmembrane segment at 423 to 443 (VLYIPSMGFCLLITVGARALY) threads the bilayer. Topologically, residues 444–449 (VKVQKR) are cytoplasmic. A helical membrane pass occupies residues 450–470 (FLKSLIFYATATLIVFYGLKT). Over 471 to 836 (AIRNGDWQNE…EKQGLKTSKT (366 aa)) the chain is Extracellular. 9 TPR repeats span residues 493–526 (AKAWGNLGNVLKSQSKISEAESAYRNALYYRSNM), 527–560 (ADMLYNLGLLLQENSRFAEALHYYKLAIGSRPTL), 561–594 (ASAYLNTGIILMNQGRTEEARRTFLKCSEIPDEN), 606–639 (TSCLYNLGKLYHEQGHYEEALSVYKEAIQKMPRQ), 643–676 (QSLYNMMGEAYMRLSKLPEAEHWYMESLRSKTDH), 677–710 (IPAHLTYGKLLALTGRKSEAEKLFLKAIELDPTK), 711–744 (GNCYMHYGQFLLEEARLIEAAEMAKKAAELDSTE), 745–778 (FDVVFNAAHMLRQASLNEAAEKYYDLAARLRPNY), and 779–812 (PAALMNLGAILHLNGRLQKAEANYLRALQLKPDD).

The protein belongs to the TMTC family.

It is found in the membrane. Its subcellular location is the endoplasmic reticulum. The catalysed reaction is a di-trans,poly-cis-dolichyl beta-D-mannosyl phosphate + L-seryl-[protein] = 3-O-(alpha-D-mannosyl)-L-seryl-[protein] + a di-trans,poly-cis-dolichyl phosphate + H(+). It catalyses the reaction a di-trans,poly-cis-dolichyl beta-D-mannosyl phosphate + L-threonyl-[protein] = 3-O-(alpha-D-mannosyl)-L-threonyl-[protein] + a di-trans,poly-cis-dolichyl phosphate + H(+). It functions in the pathway protein modification; protein glycosylation. In terms of biological role, transfers mannosyl residues to the hydroxyl group of serine or threonine residues. The 4 members of the TMTC family are O-mannosyl-transferases dedicated primarily to the cadherin superfamily, each member seems to have a distinct role in decorating the cadherin domains with O-linked mannose glycans at specific regions. Also acts as O-mannosyl-transferase on other proteins such as PDIA3. This is Protein O-mannosyl-transferase TMTC2 from Homo sapiens (Human).